A 148-amino-acid polypeptide reads, in one-letter code: Large-conductance mechanosensitive channel (148 aa).

2 helical membrane passes run 9–29 (AFAVKGNVVDMAVGIIIGAAF) and 79–99 (IQTVIDFIIVAFAIFMGVKAI).

The protein belongs to the MscL family. As to quaternary structure, homopentamer.

The protein resides in the cell inner membrane. In terms of biological role, channel that opens in response to stretch forces in the membrane lipid bilayer. May participate in the regulation of osmotic pressure changes within the cell. This Pseudomonas savastanoi pv. phaseolicola (strain 1448A / Race 6) (Pseudomonas syringae pv. phaseolicola (strain 1448A / Race 6)) protein is Large-conductance mechanosensitive channel.